A 1012-amino-acid polypeptide reads, in one-letter code: DNA polymerase catalytic subunit (1012 aa).

The protein belongs to the DNA polymerase type-B family.

The protein localises to the host nucleus. It carries out the reaction DNA(n) + a 2'-deoxyribonucleoside 5'-triphosphate = DNA(n+1) + diphosphate. In Homo sapiens (Human), this protein is DNA polymerase catalytic subunit (U38).